Consider the following 957-residue polypeptide: Collagen alpha-1(XXI) chain (957 aa).

An N-terminal signal peptide occupies residues Met1 to Ala22. The VWFA domain maps to Asp37–Leu211. N-linked (GlcNAc...) asparagine glycosylation is present at Asn62. The region spanning Gly230–Pro412 is the Laminin G-like domain. Collagen-like domains lie at Pro448–Gly500, Leu501–Gly542, and Ser543–Ala594. Disordered stretches follow at residues Pro448 to Arg786 and Gly825 to Pro938. Composition is skewed to low complexity over residues Pro451–Leu462 and Gln471–Gln481. Over residues Glu507–Arg517 the composition is skewed to basic and acidic residues. Low complexity-rich tracts occupy residues Gln618–Pro637 and Glu705–His729. Collagen-like domains are found at residues Ser681–Lys733, Gly734–Glu787, Gly825–Gly882, and Gly884–Gly934. The span at Ala732–Pro742 shows a compositional bias: basic and acidic residues. Residues Ile829–Pro838 are compositionally biased toward pro residues. Residues Glu839–Arg874 show a composition bias toward low complexity. The span at Gln889 to Pro900 shows a compositional bias: pro residues.

This sequence belongs to the fibril-associated collagens with interrupted helices (FACIT) family. As to expression, highly expressed in lymph node, jejunum, pancreas, stomach, trachea, testis, uterus and placenta; moderately expressed in brain, colon, lung, prostate, spinal cord, salivary gland and vascular smooth-muscle cells and very weakly expressed in heart, liver, kidney, bone marrow, spleen, thymus, skeletal muscle, adrenal gland and peripheral leukocytes. Expression in heart was higher in the right ventricle and atrium than in the left ventricle and atrium.

Its subcellular location is the secreted. The protein localises to the extracellular space. The protein resides in the extracellular matrix. It localises to the cytoplasm. The polypeptide is Collagen alpha-1(XXI) chain (COL21A1) (Homo sapiens (Human)).